We begin with the raw amino-acid sequence, 407 residues long: Putative cell wall shaping protein YabE (407 aa).

The first 31 residues, M1–A31, serve as a signal peptide directing secretion. Positions I206–Q286 constitute a G5 domain.

Functionally, suggested to be involved in cell wall modification. The polypeptide is Putative cell wall shaping protein YabE (yabE) (Bacillus subtilis (strain 168)).